Reading from the N-terminus, the 786-residue chain is Ciliated left-right organizer ZP-N domains-containing protein (786 aa).

The first 18 residues, 1–18 (MWGSVAVVWAICLACIQP), serve as a signal peptide directing secretion.

Expressed specifically by cells of the ciliated left-right organizer.

Functionally, plays a role in left-right patterning process. This chain is Ciliated left-right organizer ZP-N domains-containing protein (Ciroz), found in Mus musculus (Mouse).